Consider the following 111-residue polypeptide: X antigen family member 2 (111 aa).

Disordered regions lie at residues 1–61 and 77–111; these read MSWR…AAEI and KTGDGCEGGTDVKGKILPKAEHFKMPEAGEGKSQV. Residues 86–111 show a composition bias toward basic and acidic residues; the sequence is TDVKGKILPKAEHFKMPEAGEGKSQV.

The protein belongs to the GAGE family.

This is X antigen family member 2 (XAGE2) from Homo sapiens (Human).